We begin with the raw amino-acid sequence, 1331 residues long: Contactin-associated protein-like 2 (1331 aa).

A signal peptide spans 1 to 27 (MQAAPRAGCGAALLLWIVSSCLCRAWT). At 28–1262 (APSTSQKCDE…IRNGVNRNSA (1235 aa)) the chain is on the extracellular side. The F5/8 type C domain occupies 35–181 (CDEPLVSGLP…IGLRIEVYGC (147 aa)). C35 and C181 are disulfide-bonded. Positions 216 to 368 (FKTSESEGVI…SNVGNLSFSC (153 aa)) constitute a Laminin G-like 1 domain. N-linked (GlcNAc...) asparagine glycans are attached at residues N289, N346, N363, N379, N436, N506, N507, and N546. Residues C336 and C368 are joined by a disulfide bond. In terms of domain architecture, Laminin G-like 2 spans 401–552 (FRTWNPNGLL…SFANVSIDMC (152 aa)). Intrachain disulfides connect C520–C552, C558–C569, C563–C578, and C580–C590. The EGF-like 1 domain maps to 554 to 591 (IIDRCVPNHCEHGGKCSQTWDSFKCTCDETGYSGATCH). The Fibrinogen C-terminal domain maps to 592 to 798 (NSIYEPSCEA…LRCQGDRNYW (207 aa)). N-linked (GlcNAc...) asparagine glycosylation is found at N630 and N735. The 165-residue stretch at 799 to 963 (NAASFPNPSS…KVTSGFISGC (165 aa)) folds into the Laminin G-like 3 domain. Intrachain disulfides connect C936/C963, C967/C980, C974/C989, and C991/C1001. An EGF-like 2 domain is found at 963–1002 (CSGHCTSYGTNCENGGKCLERYHGYSCDCSNTAYDGTFCN). The tract at residues 1026–1045 (ARDSSSRVDNAPDQQNSHPD) is disordered. A Laminin G-like 4 domain is found at 1055–1214 (FSTTKAPCIL…IQGELVESNC (160 aa)). N1116 and N1198 each carry an N-linked (GlcNAc...) asparagine glycan. A disulfide bridge links C1178 with C1214. Residues 1263–1283 (IIGGVIAVVIFTILCTLVFLI) form a helical membrane-spanning segment. The Cytoplasmic segment spans residues 1284–1331 (RYMFRHKGTYHTNEAKGAESAESADAAIMNNDPNFTETIDESKKEWLI). Phosphoserine is present on residues S1303 and S1306.

It belongs to the neurexin family. In terms of assembly, interacts (via C-terminus) with KCNA2. Interacts with GPR37. In terms of tissue distribution, predominantly expressed in nervous system.

The protein resides in the membrane. It is found in the cell projection. The protein localises to the axon. Its subcellular location is the cell junction. It localises to the paranodal septate junction. Required for gap junction formation. Required, with CNTNAP1, for radial and longitudinal organization of myelinated axons. Plays a role in the formation of functional distinct domains critical for saltatory conduction of nerve impulses in myelinated nerve fibers. Demarcates the juxtaparanodal region of the axo-glial junction. This Homo sapiens (Human) protein is Contactin-associated protein-like 2 (CNTNAP2).